A 102-amino-acid chain; its full sequence is Urease subunit beta (102 aa).

The protein belongs to the urease beta subunit family. As to quaternary structure, heterotrimer of UreA (gamma), UreB (beta) and UreC (alpha) subunits. Three heterotrimers associate to form the active enzyme.

It is found in the cytoplasm. The enzyme catalyses urea + 2 H2O + H(+) = hydrogencarbonate + 2 NH4(+). It participates in nitrogen metabolism; urea degradation; CO(2) and NH(3) from urea (urease route): step 1/1. The chain is Urease subunit beta from Blochmanniella pennsylvanica (strain BPEN).